A 397-amino-acid polypeptide reads, in one-letter code: Elongation factor Tu (397 aa).

The region spanning 10–207 (KPHVNIGTLG…AVDNNIPDPV (198 aa)) is the tr-type G domain. Residues 19–26 (GHVDHGKT) are G1. 19-26 (GHVDHGKT) serves as a coordination point for GTP. T26 contacts Mg(2+). A G2 region spans residues 63-67 (GITIN). The segment at 84–87 (DAPG) is G3. GTP contacts are provided by residues 84 to 88 (DAPGH) and 139 to 142 (NKSD). The interval 139 to 142 (NKSD) is G4. Residues 177 to 179 (SGL) are G5.

Belongs to the TRAFAC class translation factor GTPase superfamily. Classic translation factor GTPase family. EF-Tu/EF-1A subfamily. In terms of assembly, monomer.

The protein resides in the cytoplasm. It catalyses the reaction GTP + H2O = GDP + phosphate + H(+). Its function is as follows. GTP hydrolase that promotes the GTP-dependent binding of aminoacyl-tRNA to the A-site of ribosomes during protein biosynthesis. This chain is Elongation factor Tu, found in Leifsonia xyli subsp. xyli (strain CTCB07).